The primary structure comprises 906 residues: Protein translocase subunit SecA (906 aa).

ATP is bound by residues Q89, 107 to 111 (GEGKT), and D502. Residues 868-887 (VPPAQRDPADPRTWGKVSRN) form a disordered region. 4 residues coordinate Zn(2+): C890, C892, C901, and H902.

Belongs to the SecA family. Monomer and homodimer. Part of the essential Sec protein translocation apparatus which comprises SecA, SecYEG and auxiliary proteins SecDF-YajC and YidC. It depends on Zn(2+) as a cofactor.

Its subcellular location is the cell inner membrane. The protein localises to the cytoplasm. The enzyme catalyses ATP + H2O + cellular proteinSide 1 = ADP + phosphate + cellular proteinSide 2.. Its function is as follows. Part of the Sec protein translocase complex. Interacts with the SecYEG preprotein conducting channel. Has a central role in coupling the hydrolysis of ATP to the transfer of proteins into and across the cell membrane, serving both as a receptor for the preprotein-SecB complex and as an ATP-driven molecular motor driving the stepwise translocation of polypeptide chains across the membrane. The sequence is that of Protein translocase subunit SecA from Brucella abortus (strain S19).